The chain runs to 315 residues: 4-hydroxy-3-methylbut-2-enyl diphosphate reductase (315 aa).

Residue C12 participates in [4Fe-4S] cluster binding. (2E)-4-hydroxy-3-methylbut-2-enyl diphosphate-binding residues include H43 and H81. The dimethylallyl diphosphate site is built by H43 and H81. 2 residues coordinate isopentenyl diphosphate: H43 and H81. A [4Fe-4S] cluster-binding site is contributed by C103. H131 lines the (2E)-4-hydroxy-3-methylbut-2-enyl diphosphate pocket. Dimethylallyl diphosphate is bound at residue H131. Residue H131 coordinates isopentenyl diphosphate. E133 serves as the catalytic Proton donor. Position 170 (T170) interacts with (2E)-4-hydroxy-3-methylbut-2-enyl diphosphate. C198 lines the [4Fe-4S] cluster pocket. Positions 226, 228, and 271 each coordinate (2E)-4-hydroxy-3-methylbut-2-enyl diphosphate. Dimethylallyl diphosphate-binding residues include S226, N228, and S271. Positions 226, 228, and 271 each coordinate isopentenyl diphosphate.

This sequence belongs to the IspH family. Requires [4Fe-4S] cluster as cofactor.

It catalyses the reaction isopentenyl diphosphate + 2 oxidized [2Fe-2S]-[ferredoxin] + H2O = (2E)-4-hydroxy-3-methylbut-2-enyl diphosphate + 2 reduced [2Fe-2S]-[ferredoxin] + 2 H(+). The catalysed reaction is dimethylallyl diphosphate + 2 oxidized [2Fe-2S]-[ferredoxin] + H2O = (2E)-4-hydroxy-3-methylbut-2-enyl diphosphate + 2 reduced [2Fe-2S]-[ferredoxin] + 2 H(+). The protein operates within isoprenoid biosynthesis; dimethylallyl diphosphate biosynthesis; dimethylallyl diphosphate from (2E)-4-hydroxy-3-methylbutenyl diphosphate: step 1/1. It functions in the pathway isoprenoid biosynthesis; isopentenyl diphosphate biosynthesis via DXP pathway; isopentenyl diphosphate from 1-deoxy-D-xylulose 5-phosphate: step 6/6. Catalyzes the conversion of 1-hydroxy-2-methyl-2-(E)-butenyl 4-diphosphate (HMBPP) into a mixture of isopentenyl diphosphate (IPP) and dimethylallyl diphosphate (DMAPP). Acts in the terminal step of the DOXP/MEP pathway for isoprenoid precursor biosynthesis. The chain is 4-hydroxy-3-methylbut-2-enyl diphosphate reductase from Bacillus cytotoxicus (strain DSM 22905 / CIP 110041 / 391-98 / NVH 391-98).